A 213-amino-acid chain; its full sequence is Achelase-1 (213 aa).

The Peptidase S1 domain maps to isoleucine 1–alanine 213. Residues cysteine 26 and cysteine 42 are joined by a disulfide bond. Catalysis depends on charge relay system residues histidine 41 and aspartate 86. The cysteines at positions 155 and 172 are disulfide-linked. The active-site Charge relay system is the serine 188.

It belongs to the peptidase S1 family. Hemolymph and saliva of the larval form (caterpillar).

It is found in the secreted. It localises to the extracellular space. Sensitive to serine proteinase inhibitors and thiol proteinase inhibitors. Functionally, fibrinolytic activity; shows preferential cleavage of Arg-Gly bonds in all three fibrinogen chains. Contact with the caterpillars causes severe bleeding, due the anticoagulant effect of the protein. The chain is Achelase-1 from Lonomia achelous (Giant silkworm moth).